The following is a 215-amino-acid chain: Adenylate kinase (215 aa).

10 to 15 (GAGKGT) provides a ligand contact to ATP. Residues 30 to 59 (STGDMLRAAVKAGTELGLIAKSVMDSGGLV) are NMP. Residues T31, R36, 57 to 59 (GLV), 85 to 88 (GFPR), and Q92 each bind AMP. The LID stretch occupies residues 122–159 (GRRVHEASGRVYHTVYNPPKVEGKDDVTGDDLVQRKDD). ATP-binding positions include R123 and 132 to 133 (VY). AMP is bound by residues R156 and R167. G201 contacts ATP.

This sequence belongs to the adenylate kinase family. As to quaternary structure, monomer.

The protein resides in the cytoplasm. The enzyme catalyses AMP + ATP = 2 ADP. It functions in the pathway purine metabolism; AMP biosynthesis via salvage pathway; AMP from ADP: step 1/1. Catalyzes the reversible transfer of the terminal phosphate group between ATP and AMP. Plays an important role in cellular energy homeostasis and in adenine nucleotide metabolism. The protein is Adenylate kinase of Pseudomonas fluorescens (strain SBW25).